The primary structure comprises 1391 residues: DNA-directed RNA polymerase subunit beta'' (1391 aa).

Residues C224, C295, C302, and C305 each contribute to the Zn(2+) site.

Belongs to the RNA polymerase beta' chain family. RpoC2 subfamily. In terms of assembly, in plastids the minimal PEP RNA polymerase catalytic core is composed of four subunits: alpha, beta, beta', and beta''. When a (nuclear-encoded) sigma factor is associated with the core the holoenzyme is formed, which can initiate transcription. It depends on Zn(2+) as a cofactor.

It is found in the plastid. The protein resides in the chloroplast. The catalysed reaction is RNA(n) + a ribonucleoside 5'-triphosphate = RNA(n+1) + diphosphate. Functionally, DNA-dependent RNA polymerase catalyzes the transcription of DNA into RNA using the four ribonucleoside triphosphates as substrates. The sequence is that of DNA-directed RNA polymerase subunit beta'' from Buxus microphylla (Littleleaf boxwood).